We begin with the raw amino-acid sequence, 447 residues long: UPF0210 protein LSL_0162 (447 aa).

Belongs to the UPF0210 family. Homodimer.

This Ligilactobacillus salivarius (strain UCC118) (Lactobacillus salivarius) protein is UPF0210 protein LSL_0162.